The sequence spans 804 residues: MKFTLSWLKDHLETDATLDEIVEKLTDIGLEVESVDDRAAFRAFTIARVLTATRHPDADKLQVLSVDTGDGKPVQVVCGAPNARAGLVGVLGRPGDYVPGLDVTLSVGKIRGVESFGMMCSERELELSDEHNGIIDLAENAPVGTSFAAYMGLDDPIIEIGLTPNRADCTGIRGIARDLAAAGLGTLKNTLPDAVKGEGETPVKVILDQDAGNPFCTGFALRMVKGVKNGPSPKWMQQRLKAIGLRPINALVDITNYVTFDQGRPLHVFDAAKVKGNLTVRTARDGETILALDQREYKLNAGMYVIADENGPESIAGIMGGEHSGCDENTVDVLIESALWDPRMIASTGRELGIVTDARYRFERGVDPEMMVPGAEIATKLVLELCGGQPTVLDVVGYKPHTARVIDFPVTEVKRLTGLDVSYEDAFDILKRLGFGVEGDGKTIRATVPSWRGDVEGKADLVEEVMRIHGINRIDPQPLPSHGAVNGRILTTLQIRTRHARRMLASRGMMEAVTYSFISEAQAKAFGGGKPELKLANPIAADMSDMRPSLLPGLLAAAQRNADRGFDDIALFEVSGIYEGDTPDKQRRVAGGVRRGTAKVEGAGRFWAGNAAPVGVFDAKADALAALEAAGAPVDRIQIEAGGPEWLHPGRSGTLKLGPKVVLGTFGEFHPDTLEALDVSGALCGFEVYLDAIPEPKAKSARTKPALSLSLFQSLKRDYAFVVDAAVEAGNVVKAVSSADKKLIVGVQVFDIFTGASLGEGKKSIAVEVLLQPQDRTLTDEDLEALSKQIVASVAKQTGGVLRG.

Residues 38-148 (RAAFRAFTIA…ENAPVGTSFA (111 aa)) form the tRNA-binding domain. A B5 domain is found at 401–476 (HTARVIDFPV…RIHGINRIDP (76 aa)). Residues D454, D460, E463, and E464 each contribute to the Mg(2+) site. Residues 710–803 (SLFQSLKRDY…VAKQTGGVLR (94 aa)) form the FDX-ACB domain.

Belongs to the phenylalanyl-tRNA synthetase beta subunit family. Type 1 subfamily. In terms of assembly, tetramer of two alpha and two beta subunits. Mg(2+) is required as a cofactor.

It localises to the cytoplasm. It catalyses the reaction tRNA(Phe) + L-phenylalanine + ATP = L-phenylalanyl-tRNA(Phe) + AMP + diphosphate + H(+). This is Phenylalanine--tRNA ligase beta subunit from Brucella abortus (strain 2308).